Reading from the N-terminus, the 828-residue chain is Protein ELFN1 (828 aa).

An N-terminal signal peptide occupies residues 1 to 27; the sequence is MAGRGWGALWVCVAAATLLHAGGLARA. Over 28–418 the chain is Extracellular; the sequence is DCWLIEGDKG…VPSPSTATHY (391 aa). Asn-59 carries N-linked (GlcNAc...) asparagine glycosylation. LRR repeat units follow at residues 61-82, 85-106, 109-130, 133-154, and 157-178; these read TIVDLRLNENRIRSVQYASLSR, NLTYLNLTKNEIGYIEDGAFSG, NLQVLQLGYNRLRNLTEGMLRG, KLEYLYLQANLIEVVMASSFWE, and NIVNIDLSMNRIQQLNSGTFAG. Asn-85, Asn-90, and Asn-122 each carry an N-linked (GlcNAc...) asparagine glycan. Positions 190–252 constitute an LRRCT domain; sequence NPFYCSCELL…LSKLQSVCTE (63 aa). The N-linked (GlcNAc...) asparagine glycan is linked to Asn-210. A disordered region spans residues 259–291; that stretch reads VVGPPRPASGRSQPGRSPPPPPPPEPSDMPCAD. Pro residues predominate over residues 274–285; the sequence is RSPPPPPPPEPS. The 88-residue stretch at 312-399 folds into the Fibronectin type-III domain; the sequence is QAEARPLIKV…HNHTCLTICL (88 aa). An LRR 6 repeat occupies 318–342; sequence LIKVKQLTQNSATITVQLPSPFHRM. N-linked (GlcNAc...) asparagine glycosylation occurs at Asn-376. Residues 419 to 439 form a helical membrane-spanning segment; that stretch reads IMTILGCLFGMVLVLGAVYYC. Residues 440–828 are Cytoplasmic-facing; that stretch reads LRRRRRQEEK…WKGVSAQHKS (389 aa). Position 461 is a phosphoserine (Ser-461). Disordered stretches follow at residues 517 to 552, 624 to 649, and 696 to 732; these read TPKASKGSYMEVRTGDPPERRDCELGRPGPDSQSSV, LQRHHSVEAAGPPRASTSSSGSVRSP, and KGRQYGEHRHSYPGSHPAEPPAPPGPPPPPPHEGLGR. The span at 529-541 shows a compositional bias: basic and acidic residues; it reads RTGDPPERRDCEL. Residues 632 to 649 show a composition bias toward low complexity; that stretch reads AAGPPRASTSSSGSVRSP. Phosphoserine is present on Ser-645. Residues 696 to 705 are compositionally biased toward basic and acidic residues; sequence KGRQYGEHRH. The segment covering 713 to 727 has biased composition (pro residues); it reads AEPPAPPGPPPPPPH.

Interacts with PPP1CA.

Its subcellular location is the membrane. The protein resides in the cell projection. It localises to the dendrite. Its function is as follows. Postsynaptic protein that regulates circuit dynamics in the central nervous system by modulating the temporal dynamics of interneuron recruitment. Specifically present in excitatory synapses onto oriens-lacunosum molecular (OLM) interneurons and acts as a regulator of presynaptic release probability to direct the formation of highly facilitating pyramidal-OLM synapses. Inhibits phosphatase activity of protein phosphatase 1 (PP1) complexes. The protein is Protein ELFN1 (ELFN1) of Homo sapiens (Human).